Consider the following 175-residue polypeptide: Arsenite oxidase subunit AioB (175 aa).

The tat-type signal signal peptide spans 1–32 (MSDTINLTRRGFLKVSGSGVAVAATLSPIASA). A Rieske domain is found at 62–158 (NEPVSFTYPD…LRYDEASDAL (97 aa)). 4 residues coordinate [2Fe-2S] cluster: Cys102, His104, Cys120, and His123. Residues Cys107 and Cys122 are joined by a disulfide bond.

This sequence belongs to the AOX family. Heterodimer consisting of a large and a small subunit. It depends on [2Fe-2S] cluster as a cofactor. In terms of processing, predicted to be exported by the Tat system. The position of the signal peptide cleavage has not been experimentally proven.

It carries out the reaction 2 oxidized [azurin] + arsenite + H2O = 2 reduced [azurin] + arsenate + 3 H(+). Functionally, involved in the detoxification of arsenic. Oxidizes As(III)O3(3-) (arsenite) to the somewhat less toxic As(V)O4(3-) (arsenate). This is Arsenite oxidase subunit AioB (aioB) from Alcaligenes faecalis.